Consider the following 366-residue polypeptide: MEPQLNQEVINTAAQHDGPIETDAVIVGAGPVGLFQVFELGLLEIKAHVIDSLAYPGGQCIELYPDKPIYDIPAVPMCTGKELTDSLLKQIEPFGATFHFGQEVSVVEKQEDGRFFVETSKGTKFLTKTIFIAAGVGAFQPKLLRVDGLDQFDNTQLFYRVKNPADFAGKNLVIVGGGDSALDWALNFVAEGPNKAESVILVHRRDGFKAAPASVAKMKELCDAYEMQFIVGQVTGYDEKNGKMTGAKVTGADGVTRVVPLDVLLVFFGLSPKLGPIAHWGLDIERKQLMVDTEKFSTNIPGIFAVGDINTYPGKKKLILSGFHECALAAFGAAPFIFPDKKIHLQYTTTSPKLHKVLGVESPVFD.

Positions 51, 59, 64, 104, 139, 308, and 349 each coordinate FAD.

It belongs to the ferredoxin--NADP reductase type 2 family. Homodimer. The cofactor is FAD.

The catalysed reaction is 2 reduced [2Fe-2S]-[ferredoxin] + NADP(+) + H(+) = 2 oxidized [2Fe-2S]-[ferredoxin] + NADPH. The sequence is that of Ferredoxin--NADP reductase from Polaromonas sp. (strain JS666 / ATCC BAA-500).